Consider the following 516-residue polypeptide: Extracellular endo-inulinase inu2 (516 aa).

The N-terminal stretch at 1–23 (MLNPKVAYMVWMTCLGLTLPSQA) is a signal peptide. Substrate-binding positions include 41–43 (MNE) and Asn61. The active site involves Glu43. 2 N-linked (GlcNAc...) asparagine glycosylation sites follow: Asn108 and Asn109. A substrate-binding site is contributed by Asp176. Asn210 carries an N-linked (GlcNAc...) asparagine glycan. Asn320 is a substrate binding site. Asn372 is a glycosylation site (N-linked (GlcNAc...) asparagine).

The protein belongs to the glycosyl hydrolase 32 family.

The protein localises to the secreted. The enzyme catalyses Endohydrolysis of (2-&gt;1)-beta-D-fructosidic linkages in inulin.. Endo-inulinase involved in utilization of the plant storage polymer inulin, consisting of fructooligosaccharides with a degree of polymerization (DP) value from 2 to 60. The chain is Extracellular endo-inulinase inu2 (inu2) from Aspergillus ficuum.